Here is a 357-residue protein sequence, read N- to C-terminus: NAD kinase 1 (357 aa).

The active-site Proton acceptor is aspartate 68. Residues 68–69 (DG), arginine 73, 175–176 (ND), arginine 186, aspartate 205, alanine 240, and glutamine 275 contribute to the NAD(+) site.

This sequence belongs to the NAD kinase family. It depends on a divalent metal cation as a cofactor.

It localises to the cytoplasm. It catalyses the reaction NAD(+) + ATP = ADP + NADP(+) + H(+). In terms of biological role, involved in the regulation of the intracellular balance of NAD and NADP, and is a key enzyme in the biosynthesis of NADP. Catalyzes specifically the phosphorylation on 2'-hydroxyl of the adenosine moiety of NAD to yield NADP. This chain is NAD kinase 1, found in Streptomyces avermitilis (strain ATCC 31267 / DSM 46492 / JCM 5070 / NBRC 14893 / NCIMB 12804 / NRRL 8165 / MA-4680).